The chain runs to 164 residues: MIRKLDDFDIKILDLLQHDATATMAELSEKTGLSANACWRRIRLLEADGVIKNRVTLLDPQKIGLGITVFVCIRCAEHSQDWLDNFLQIVNESPEVIEFYRLAGDIDYLLKLQVASISEYDRLYKKLVSRVKLTDVSAIFSMEELKHSTILPLPETSDKAERKA.

In terms of domain architecture, HTH asnC-type spans 5 to 66 (LDDFDIKILD…LLDPQKIGLG (62 aa)). Residues 24–43 (MAELSEKTGLSANACWRRIR) constitute a DNA-binding region (H-T-H motif).

Its function is as follows. Represses the secondary, H(+)-coupled glutamate uptake system (Gluemp) genes. The chain is Glutamate uptake regulatory protein (grp) from Zymomonas mobilis subsp. mobilis (strain ATCC 31821 / ZM4 / CP4).